Here is a 476-residue protein sequence, read N- to C-terminus: POC1 centriolar protein homolog B (476 aa).

WD repeat units lie at residues 16–55 (GHKAAITSADFSPNCKQIATASWDTFLMLWSLKPHARAYR), 58–97 (GHKDVVTSLQFSPQGNLLASASRDRTVRLWVLDRKGKSSE), 100–139 (AHTAPVRSVDFSADGQLLVTASEDKSIKVWSMFRQRFLYS), 142–181 (RHTHWVRCAKFSPDGRLIVSCSEDKTIKIWDTTNKQCVNN), 183–223 (SDSV…LLQH), 226–265 (VHSCGVNCLSFHPLGNSLVTASSDGTVKMLDLIEGRLIYT), and 268–307 (GHTGPVFTVSFSKDGELLTSGGADAQVLIWRTNFIHLHCK). The stretch at 429–468 (ALEHIMEQLNILTQTVSILEQRLSLTEDKLRDCLENQQKL) forms a coiled coil.

Belongs to the WD repeat POC1 family. In terms of assembly, interacts with POC1A. Interacts with FAM161A. Interacts with CEP44; the interaction is direct and recruits POC1B to centriolar microtubules. Forms a microtubule-associated complex with POC5, CETN2 and FAM161A. Interacts with CCDC15. In terms of processing, phosphorylated in mitotic cells that may be mediated by CDK1. In terms of tissue distribution, expressed in the retina.

Its subcellular location is the cytoplasm. It localises to the cytoskeleton. It is found in the microtubule organizing center. The protein localises to the centrosome. The protein resides in the centriole. Its subcellular location is the cilium basal body. It localises to the spindle pole. Plays an important role in centriole assembly and/or stability and ciliogenesis. Involved in early steps of centriole duplication, as well as in the later steps of centriole length control. Acts in concert with POC1A to ensure centriole integrity and proper mitotic spindle formation. Required for primary cilia formation, ciliary length and also cell proliferation. Required for retinal integrity. Acts as a positive regulator of centriole elongation. The sequence is that of POC1 centriolar protein homolog B (Poc1b) from Mus musculus (Mouse).